The following is a 532-amino-acid chain: Telomerase Cajal body protein 1 (532 aa).

The segment at 1 to 53 is disordered; that stretch reads MKTSEERLLAPDSLPPDLAPAPVPQGSPAEKNTDFEPVPPPCGGDDQPQLATD. Positions 13-25 are enriched in pro residues; sequence SLPPDLAPAPVPQ. A phosphoserine mark is found at Ser27, Ser61, and Ser83. The interval 80–122 is disordered; the sequence is SELSPGIEEQDVSEHASLPGEETNLPELESGEATEGVSEERAE. 6 WD repeats span residues 151–190, 206–251, 256–297, 307–348, 349–389, and 395–434; these read RSEN…YSEQ, EGDT…LRAS, NHLD…RDCE, GQSG…ALLG, GHQG…HLLW, and VTTN…SDDS. Thr474 is modified (phosphothreonine). A Phosphoserine modification is found at Ser476. Positions 510 to 532 are disordered; sequence DPSSPVDDQDEKGQRRTEAVGMS. A compositionally biased stretch (basic and acidic residues) spans 520-532; that stretch reads EKGQRRTEAVGMS.

It belongs to the TCAB1 family. As to quaternary structure, component of the telomerase holoenzyme complex composed of one molecule of TERT, one molecule of WRAP53/TCAB1, two molecules of H/ACA ribonucleoprotein complex subunits DKC1, NOP10, NHP2 and GAR1, and a telomerase RNA template component (TERC). The telomerase holoenzyme complex is associated with TEP1, SMG6/EST1A and POT1. Interacts with the chaperonin-containing T-complex (TRiC) complex; which mediates the folding of WRAP53/TCAB1. Interacts with COIL. Interacts with SMN1. Interacts with RNF8. Interacts with histone H2AX. In terms of processing, phosphorylated at Ser-61 by ATM in response to DNA damage, promoting its interaction with histone H2AX and localization to sites of DNA double-strand breaks.

It is found in the nucleus. It localises to the cajal body. The protein resides in the chromosome. Its subcellular location is the telomere. In terms of biological role, RNA chaperone that plays a key role in telomere maintenance and RNA localization to Cajal bodies. Specifically recognizes and binds the Cajal body box (CAB box) present in both small Cajal body RNAs (scaRNAs) and telomerase RNA template component (TERC). Essential component of the telomerase holoenzyme complex, a ribonucleoprotein complex essential for the replication of chromosome termini that elongates telomeres in most eukaryotes. In the telomerase holoenzyme complex, required to stimulate the catalytic activity of the complex. Acts by specifically binding the CAB box of the TERC RNA and controlling the folding of the CR4/CR5 region of the TERC RNA, a critical step for telomerase activity. In addition, also controls telomerase holoenzyme complex localization to Cajal body. During S phase, required for delivery of TERC to telomeres during S phase and for telomerase activity. In addition to its role in telomere maintenance, also required for Cajal body formation, probably by mediating localization of scaRNAs to Cajal bodies. Also plays a role in DNA repair: phosphorylated by ATM in response to DNA damage and relocalizes to sites of DNA double-strand breaks to promote the repair of DNA double-strand breaks. Acts by recruiting the ubiquitin ligase RNF8 to DNA breaks and promote both homologous recombination (HR) and non-homologous end joining (NHEJ). This chain is Telomerase Cajal body protein 1, found in Mus musculus (Mouse).